The sequence spans 229 residues: Small ribosomal subunit protein uS2c (229 aa).

It belongs to the universal ribosomal protein uS2 family.

Its subcellular location is the plastid. It is found in the chloroplast. The sequence is that of Small ribosomal subunit protein uS2c (rps2) from Trieres chinensis (Marine centric diatom).